The chain runs to 224 residues: Pyridoxine/pyridoxamine 5'-phosphate oxidase (224 aa).

FMN contacts are provided by residues 69–74 (RHVLLK), 83–84 (FT), Arg89, Lys90, and Gln112. Position 74 (Lys74) interacts with substrate. Substrate contacts are provided by Tyr130, Arg134, and Ser138. FMN is bound by residues 148–149 (QS) and Trp194. Position 200–202 (200–202 (RMH)) interacts with substrate. Arg204 contributes to the FMN binding site.

The protein belongs to the pyridoxamine 5'-phosphate oxidase family. In terms of assembly, homodimer. It depends on FMN as a cofactor.

The catalysed reaction is pyridoxamine 5'-phosphate + O2 + H2O = pyridoxal 5'-phosphate + H2O2 + NH4(+). It catalyses the reaction pyridoxine 5'-phosphate + O2 = pyridoxal 5'-phosphate + H2O2. The protein operates within cofactor metabolism; pyridoxal 5'-phosphate salvage; pyridoxal 5'-phosphate from pyridoxamine 5'-phosphate: step 1/1. It participates in cofactor metabolism; pyridoxal 5'-phosphate salvage; pyridoxal 5'-phosphate from pyridoxine 5'-phosphate: step 1/1. In terms of biological role, catalyzes the oxidation of either pyridoxine 5'-phosphate (PNP) or pyridoxamine 5'-phosphate (PMP) into pyridoxal 5'-phosphate (PLP). This Acidothermus cellulolyticus (strain ATCC 43068 / DSM 8971 / 11B) protein is Pyridoxine/pyridoxamine 5'-phosphate oxidase.